The sequence spans 218 residues: MRPDGPRDPVAGPDSGPEPPYPVRLSGPVIKGFGRGSKELGIPTANIPAEGLAEYPDLQVGVYYGVVALDPAKFQYQEDQGEGSTSSTGGAGAGAGAAILPAVLSIGYNPFYKNKTKSIEIHIMPPLSSPSPTAEGAGEVKFHKLPDFYGTQLKLLILGYIRPEYDYVSLEALIEDIRVDCEVARKSLQRPAYACYIDGDEKECSDAVREQRRWLVNF.

The interval 1–27 is disordered; the sequence is MRPDGPRDPVAGPDSGPEPPYPVRLSG. Mg(2+) is bound by residues threonine 44 and asparagine 46. Glutamate 120 acts as the Nucleophile in catalysis.

Belongs to the flavokinase family. Zn(2+) serves as cofactor. Mg(2+) is required as a cofactor.

It carries out the reaction riboflavin + ATP = FMN + ADP + H(+). Its pathway is cofactor biosynthesis; FMN biosynthesis; FMN from riboflavin (ATP route): step 1/1. Functionally, catalyzes the phosphorylation of riboflavin (vitamin B2) to form flavin mononucleotide (FMN) coenzyme. The sequence is that of Riboflavin kinase (fmn1) from Neosartorya fischeri (strain ATCC 1020 / DSM 3700 / CBS 544.65 / FGSC A1164 / JCM 1740 / NRRL 181 / WB 181) (Aspergillus fischerianus).